The sequence spans 256 residues: Small ribosomal subunit protein eS1 (256 aa).

Residue Ala-2 is modified to N-acetylalanine; partial.

It belongs to the eukaryotic ribosomal protein eS1 family. Component of the small ribosomal subunit. Mature ribosomes consist of a small (40S) and a large (60S) subunit. The 40S subunit contains about 33 different proteins and 1 molecule of RNA (18S). The 60S subunit contains about 49 different proteins and 3 molecules of RNA (25S, 5.8S and 5S).

The protein localises to the cytoplasm. This chain is Small ribosomal subunit protein eS1, found in Lentinula edodes (Shiitake mushroom).